Consider the following 1235-residue polypeptide: Ubiquitin carboxyl-terminal hydrolase 40 (1235 aa).

Positions 41–482 constitute a USP domain; it reads SGIRNQGGTC…SAYMLFYRKS (442 aa). C50 (nucleophile) is an active-site residue. H305 acts as the Proton acceptor in catalysis. Residues 1180-1190 show a composition bias toward basic and acidic residues; that stretch reads IRDDTGKEKQK. Residues 1180 to 1235 form a disordered region; sequence IRDDTGKEKQKQRALGRRKSQEALHEQSSYILSSAETPARPRAPETSLSIHVGSFR. The span at 1205-1215 shows a compositional bias: polar residues; sequence EQSSYILSSAE.

It belongs to the peptidase C19 family. Broadly expressed.

It catalyses the reaction Thiol-dependent hydrolysis of ester, thioester, amide, peptide and isopeptide bonds formed by the C-terminal Gly of ubiquitin (a 76-residue protein attached to proteins as an intracellular targeting signal).. May be catalytically inactive. The sequence is that of Ubiquitin carboxyl-terminal hydrolase 40 (USP40) from Homo sapiens (Human).